The following is a 620-amino-acid chain: Sterile alpha motif domain-containing protein 15 (620 aa).

Positions Met1–Leu394 are disordered. Composition is skewed to basic and acidic residues over residues Thr62–Arg83, Ile106–Glu125, and Thr135–Ser180. Polar residues predominate over residues Thr181–Gln191. Residues Arg233–Gln242 are compositionally biased toward basic residues. Residues Leu261–Glu270 show a composition bias toward acidic residues. 4 stretches are compositionally biased toward basic and acidic residues: residues Glu271–Pro286, Lys295–Pro315, Phe323–Asp337, and Ile347–Ser382. In terms of domain architecture, SAM spans Trp480 to Ile543. A compositionally biased stretch (basic and acidic residues) spans Glu594–Ala604. The tract at residues Glu594–Thr620 is disordered. Positions Ser609–Thr620 are enriched in acidic residues.

In Mus musculus (Mouse), this protein is Sterile alpha motif domain-containing protein 15 (Samd15).